Here is a 296-residue protein sequence, read N- to C-terminus: Class E basic helix-loop-helix protein 22 (296 aa).

Residues 26–70 form a disordered region; sequence SAFRPPQGLDLSQPGDRSPLHCYDGPDPSDLLRHHQHHHQASSGA. Positions 153–207 constitute a bHLH domain; that stretch reads TLRLNINARERRRMHDLNDALDELRAVIPYAHSPSVRKLSKIATLLLAKNYILMQ.

It is found in the nucleus. May act as a transcriptional repressor. The chain is Class E basic helix-loop-helix protein 22 (bhlhe22) from Xenopus tropicalis (Western clawed frog).